The primary structure comprises 492 residues: Glycosyltransferase alg8 (492 aa).

Helical transmembrane passes span 13-32 (GWLL…PPQV), 47-69 (IGVW…LYVV), 379-401 (LTVA…LLWV), and 421-443 (PAYP…HVFF).

It belongs to the glycosyltransferase 2 family.

It is found in the cell membrane. The protein operates within glycan biosynthesis; alginate biosynthesis. Its function is as follows. Possibly a processive enzyme that polymerizes GDP-mannuronic acid. This is Glycosyltransferase alg8 (alg8) from Azotobacter vinelandii.